We begin with the raw amino-acid sequence, 535 residues long: Ribonuclease Y (535 aa).

Residues Ile4–Ile24 form a helical membrane-spanning segment. The disordered stretch occupies residues Glu118–Ile141. One can recognise a KH domain in the interval Thr225 to Leu285. One can recognise an HD domain in the interval Val351–Ala444.

This sequence belongs to the RNase Y family.

The protein localises to the cell membrane. In terms of biological role, endoribonuclease that initiates mRNA decay. The polypeptide is Ribonuclease Y (Streptococcus pyogenes serotype M18 (strain MGAS8232)).